The chain runs to 682 residues: Tetratricopeptide repeat protein 39B (682 aa).

TPR repeat units lie at residues Ser393–Trp426 and Pro626–Tyr659.

It belongs to the TTC39 family.

In terms of biological role, regulates high density lipoprotein (HDL) cholesterol metabolism by promoting the ubiquitination and degradation of the oxysterols receptors LXR (NR1H2 and NR1H3). This Homo sapiens (Human) protein is Tetratricopeptide repeat protein 39B.